The following is a 292-amino-acid chain: Tetratricopeptide repeat protein 1 (292 aa).

2 stretches are compositionally biased toward basic and acidic residues: residues 1–12 and 47–64; these read MEEKSEDCKVPE and KAAEAHPQDDHVEEECFH. The disordered stretch occupies residues 1-125; the sequence is MEEKSEDCKV…SAKLKEEGNE (125 aa). Positions 88 to 98 are enriched in acidic residues; the sequence is SSSELDEEYLI. A Phosphoserine modification is found at Ser90. Residues 99–125 show a composition bias toward basic and acidic residues; the sequence is ELEKNMPEEEKQKRREESAKLKEEGNE. TPR repeat units lie at residues 116 to 149, 155 to 188, and 189 to 222; these read SAKLKEEGNERFKRGDYMEAESSYSQALQMCPAC, SVLFSNRAAARMKQDKKETAITDCSKAIQLNPTY, and IRAILRRAELYEKTDKLDEALEDYKSVLEKDPSV.

Interacts with the GAP domain of NF1. Interacts (via TPR repeats) with HSP90AA1 and HSPA8.

The chain is Tetratricopeptide repeat protein 1 (Ttc1) from Mus musculus (Mouse).